Reading from the N-terminus, the 437-residue chain is Protein PhoH2 (437 aa).

In terms of domain architecture, PINc spans 7 to 134; sequence RTYVLDTSVL…LVSKDIPLRV (128 aa).

It in the N-terminal section; belongs to the PINc/VapC protein family. In the C-terminal section; belongs to the PhoH family. As to quaternary structure, interacts with antitoxin PhoAT. Mg(2+) serves as cofactor.

It carries out the reaction n ATP + n H2O + wound RNA = n ADP + n phosphate + unwound RNA.. The catalysed reaction is ATP + H2O = ADP + phosphate + H(+). It catalyses the reaction GTP + H2O = GDP + phosphate + H(+). Functionally, toxic component of a type II toxin-antitoxin (TA) system. The possible cognate antitoxin is PhoAT; the toxin gene can be expressed in the absence of the antitoxin gene in an endogenous mc(2)155 double deletion. Unwinds and/or cleaves 5'-tailed RNA in vitro that starts with 5'-AC, the reaction requires hydrolyzable ATP; double-stranded (ds)RNA and dsDNA are not unwound or cleaved. Has ATPase and GTPase activities. The sequence is that of Protein PhoH2 from Mycolicibacterium smegmatis (strain ATCC 700084 / mc(2)155) (Mycobacterium smegmatis).